A 305-amino-acid chain; its full sequence is UDP-3-O-acyl-N-acetylglucosamine deacetylase (305 aa).

Residues H79, H238, and D242 each contribute to the Zn(2+) site. The Proton donor role is filled by H265.

It belongs to the LpxC family. Zn(2+) serves as cofactor.

It carries out the reaction a UDP-3-O-[(3R)-3-hydroxyacyl]-N-acetyl-alpha-D-glucosamine + H2O = a UDP-3-O-[(3R)-3-hydroxyacyl]-alpha-D-glucosamine + acetate. Its pathway is glycolipid biosynthesis; lipid IV(A) biosynthesis; lipid IV(A) from (3R)-3-hydroxytetradecanoyl-[acyl-carrier-protein] and UDP-N-acetyl-alpha-D-glucosamine: step 2/6. Catalyzes the hydrolysis of UDP-3-O-myristoyl-N-acetylglucosamine to form UDP-3-O-myristoylglucosamine and acetate, the committed step in lipid A biosynthesis. In Shigella boydii serotype 4 (strain Sb227), this protein is UDP-3-O-acyl-N-acetylglucosamine deacetylase.